The chain runs to 170 residues: Bacilliredoxin SRU_1493 (170 aa).

Residues 140–170 (CGDEEPPADAPSRPDPSSSGEGLPSTFQSIT) are disordered.

It belongs to the bacilliredoxin family.

This is Bacilliredoxin SRU_1493 from Salinibacter ruber (strain DSM 13855 / M31).